A 535-amino-acid chain; its full sequence is Proto-oncogene tyrosine-protein kinase Src (535 aa).

The segment at 1-56 is disordered; that stretch reads MGSNKSKPKDASQRRRSLEPSENVHGAGGAFPASQTPSKPASADGHRGPSAAFVPP. Residue Gly2 is the site of N-myristoyl glycine attachment. Over residues 7-19 the composition is skewed to basic and acidic residues; that stretch reads KPKDASQRRRSLE. Residues Ser17, Ser21, and Ser74 each carry the phosphoserine modification. The SH3 domain occupies 83 to 144; that stretch reads GGVTTFVALY…PSNYVAPSDS (62 aa). The 98-residue stretch at 150 to 247 folds into the SH2 domain; sequence WYFGKITRRE…GLCHRLTTVC (98 aa). The residue at position 186 (Tyr186) is a Phosphotyrosine. The Protein kinase domain maps to 269 to 522; the sequence is LRLEVKLGQG…YLQAFLEDYF (254 aa). ATP is bound by residues 275–283 and Lys297; that span reads LGQGCFGEV. Catalysis depends on Asp388, which acts as the Proton acceptor. Residue Tyr418 is modified to Phosphotyrosine; by autocatalysis. Position 418 is a phosphotyrosine; by FAK2 (Tyr418). At Tyr529 the chain carries Phosphotyrosine; by CSK.

It belongs to the protein kinase superfamily. Tyr protein kinase family. SRC subfamily. Part of a complex comprised of PTPRA, BCAR1, BCAR3 (via SH2 domain) and SRC; the formation of the complex is dependent on integrin mediated-tyrosine phosphorylation of PTPRA. Interacts with CDCP1, TGFB1I1 and TOM1L2. Interacts with DDEF1/ASAP1 via its SH3 domain. Interacts with CCPG1. Interacts with the cytoplasmic domain of MUC1, phosphorylates it and increases binding of MUC1 with beta-catenin. Interacts with RALGPS1 via its SH3 domain. Interacts with CAV2 (tyrosine phosphorylated form). Interacts (via the SH3 domain and the protein kinase domain) with ARRB1; the interaction is independent of the phosphorylation state of SRC C-terminus. Interacts with FCAMR and PXN. Interacts with ARRB2. Interacts with ARRB1. Interacts with SRCIN1. Interacts with NDFIP2 and more weakly with NDFIP1. Interacts with PIK3CA and/or PIK3C2B, PTK2/FAK1, ESR1 (dimethylated on arginine) and FAK. Interacts (via SH2 and SH3 domain) with TNK2. Interacts (via protein kinase domain) with the tyrosine phosphorylated form of RUNX3 (via runt domain). Interacts with TRAF3 (via RING-type zinc finger domain). Interacts with RIGI, MAVS and TBK1. Interacts (via SH2 domain) with RACK1; the interaction is enhanced by tyrosine phosphorylation of RACK1 and inhibits SRC activity. Interacts (via SH2 domain) with the 'Tyr-402' phosphorylated form of PTK2B/PYK2. Interacts (via SH2 domain) with FLT3 (tyrosine phosphorylated). Identified in a complex containing FGFR4, NCAM1, CDH2, PLCG1, FRS2, SRC, SHC1, GAP43 and CTTN. Interacts with EPHB1; activates the MAPK/ERK cascade to regulate cell migration. Interacts with ERBB2 and STAT1. Interacts with PDGFRA (tyrosine phosphorylated). Interacts with CSF1R. Interacts (via SH2 domain) with the 'Tyr-9' phosphorylated form of PDPK1. Interacts with DDR2. Interacts with AMOTL2; this interaction regulates the translocation of phosphorylated SRC to peripheral cell-matrix adhesion sites. Interacts with DDR1 and DAB2. Interacts with TRAP1. Interacts with CBLC; the interaction is enhanced when SRC is phosphorylated at 'Tyr-424'. Interacts with ARHGEF5. Interacts (via cytoplasmic domain) with CEACAM1 (via SH2 domain); this interaction is regulated by trans-homophilic cell adhesion. Interacts with MPP2. Interacts with PRR7. Interacts (via kinase domain and to a lesser extent the SH2 domain) directly with PDLIM4; this interaction results in PTPN13-mediated dephosphorylation of this protein leading to its inactivation. Interacts with P85 (PIK3R1 or PIK3R2). Interacts with HNRNPA2B1. Interacts with IL6ST/gp130. Interacts (via SH3 domain) with PELP1 in the presence of 17-beta-estradiol. Interacts with AMBRA1. Myristoylated at Gly-2, and this is essential for targeting to membranes. In terms of processing, dephosphorylated at Tyr-529 by PTPRJ. Phosphorylated on Tyr-529 by c-Src kinase (CSK). The phosphorylated form is termed pp60c-src. Dephosphorylated by PTPRJ at Tyr-418. Normally maintained in an inactive conformation with the SH2 domain engaged with Tyr-529, the SH3 domain engaged with the SH2-kinase linker, and Tyr-418 dephosphorylated. Dephosphorylation of Tyr-529 as a result of protein tyrosine phosphatase (PTP) action disrupts the intramolecular interaction between the SH2 domain and Tyr-529, Tyr-418 can then become autophosphorylated, resulting in SRC activation. Phosphorylation of Tyr-529 by CSK allows this interaction to reform, resulting in SRC inactivation. CDK5-mediated phosphorylation at Ser-74 targets SRC to ubiquitin-dependent degradation and thus leads to cytoskeletal reorganization. Phosphorylated by PTK2/FAK1; this enhances kinase activity. Phosphorylated by PTK2B/PYK2; this enhances kinase activity. Upon activation of IL6ST by IL6, Tyr-418 is phosphorylated and Tyr-529 dephosphorylated. Post-translationally, displays reduced levels of autophosphorylation at Tyr-418 compared to isoform 2. Displays enhanced levels of autophosphorylation at Tyr-418 compared to isoform 1. In terms of processing, S-nitrosylation is important for activation of its kinase activity. Post-translationally, ubiquitinated in response to CDK5-mediated phosphorylation. Ubiquitination mediated by CBLC requires SRC autophosphorylation at Tyr-418 and may lead to lysosomal degradation.

The protein localises to the cell membrane. The protein resides in the mitochondrion inner membrane. Its subcellular location is the nucleus. It localises to the cytoplasm. It is found in the cytoskeleton. The protein localises to the perinuclear region. The protein resides in the cell junction. Its subcellular location is the focal adhesion. The catalysed reaction is L-tyrosyl-[protein] + ATP = O-phospho-L-tyrosyl-[protein] + ADP + H(+). With respect to regulation, phosphorylation by CSK at Tyr-529 inhibits kinase activity. Inhibitory phosphorylation at Tyr-529 is enhanced by heme. Further phosphorylation by CDK1 partially reactivates CSK-inactivated SRC and facilitates complete reactivation by protein tyrosine phosphatase PTPRC. Integrin engagement stimulates kinase activity. Phosphorylation by PTK2/FAK1 enhances kinase activity. Butein and pseudosubstrate-based peptide inhibitors like CIYKYYF act as inhibitors. Phosphorylation at Tyr-418 increases kinase activity. In terms of biological role, non-receptor protein tyrosine kinase which is activated following engagement of many different classes of cellular receptors including immune response receptors, integrins and other adhesion receptors, receptor protein tyrosine kinases, G protein-coupled receptors as well as cytokine receptors. Participates in signaling pathways that control a diverse spectrum of biological activities including gene transcription, immune response, cell adhesion, cell cycle progression, apoptosis, migration, and transformation. Due to functional redundancy between members of the SRC kinase family, identification of the specific role of each SRC kinase is very difficult. SRC appears to be one of the primary kinases activated following engagement of receptors and plays a role in the activation of other protein tyrosine kinase (PTK) families. Receptor clustering or dimerization leads to recruitment of SRC to the receptor complexes where it phosphorylates the tyrosine residues within the receptor cytoplasmic domains. Plays an important role in the regulation of cytoskeletal organization through phosphorylation of specific substrates such as AFAP1. Phosphorylation of AFAP1 allows the SRC SH2 domain to bind AFAP1 and to localize to actin filaments. Cytoskeletal reorganization is also controlled through the phosphorylation of cortactin (CTTN). When cells adhere via focal adhesions to the extracellular matrix, signals are transmitted by integrins into the cell resulting in tyrosine phosphorylation of a number of focal adhesion proteins, including PTK2/FAK1 and paxillin (PXN). In addition to phosphorylating focal adhesion proteins, SRC is also active at the sites of cell-cell contact adherens junctions and phosphorylates substrates such as beta-catenin (CTNNB1), delta-catenin (CTNND1), and plakoglobin (JUP). Another type of cell-cell junction, the gap junction, is also a target for SRC, which phosphorylates connexin-43 (GJA1). SRC is implicated in regulation of pre-mRNA-processing and phosphorylates RNA-binding proteins such as KHDRBS1. Phosphorylates PKP3 at 'Tyr-195' in response to reactive oxygen species, which may cause the release of PKP3 from desmosome cell junctions into the cytoplasm. Also plays a role in PDGF-mediated tyrosine phosphorylation of both STAT1 and STAT3, leading to increased DNA binding activity of these transcription factors. Involved in the RAS pathway through phosphorylation of RASA1 and RASGRF1. Plays a role in EGF-mediated calcium-activated chloride channel activation. Required for epidermal growth factor receptor (EGFR) internalization through phosphorylation of clathrin heavy chain (CLTC and CLTCL1) at 'Tyr-1477'. Involved in beta-arrestin (ARRB1 and ARRB2) desensitization through phosphorylation and activation of GRK2, leading to beta-arrestin phosphorylation and internalization. Has a critical role in the stimulation of the CDK20/MAPK3 mitogen-activated protein kinase cascade by epidermal growth factor. Might be involved not only in mediating the transduction of mitogenic signals at the level of the plasma membrane but also in controlling progression through the cell cycle via interaction with regulatory proteins in the nucleus. Plays an important role in osteoclastic bone resorption in conjunction with PTK2B/PYK2. Both the formation of a SRC-PTK2B/PYK2 complex and SRC kinase activity are necessary for this function. Recruited to activated integrins by PTK2B/PYK2, thereby phosphorylating CBL, which in turn induces the activation and recruitment of phosphatidylinositol 3-kinase to the cell membrane in a signaling pathway that is critical for osteoclast function. Promotes energy production in osteoclasts by activating mitochondrial cytochrome C oxidase. Phosphorylates DDR2 on tyrosine residues, thereby promoting its subsequent autophosphorylation. Phosphorylates RUNX3 and COX2 on tyrosine residues, TNK2 on 'Tyr-284' and CBL on 'Tyr-738'. Enhances RIGI-elicited antiviral signaling. Phosphorylates PDPK1 at 'Tyr-9', 'Tyr-373' and 'Tyr-376'. Phosphorylates BCAR1 at 'Tyr-226'. Phosphorylates CBLC at multiple tyrosine residues, phosphorylation at 'Tyr-341' activates CBLC E3 activity. Phosphorylates synaptic vesicle protein synaptophysin (SYP). Involved in anchorage-independent cell growth. Required for podosome formation. Mediates IL6 signaling by activating YAP1-NOTCH pathway to induce inflammation-induced epithelial regeneration. Phosphorylates OTUB1, promoting deubiquitination of RPTOR. Functionally, non-receptor protein tyrosine kinase which phosphorylates synaptophysin with high affinity. Non-receptor protein tyrosine kinase which shows higher basal kinase activity than isoform 1, possibly due to weakened intramolecular interactions which enhance autophosphorylation of Tyr-418 and subsequent activation. The SH3 domain shows reduced affinity with the linker sequence between the SH2 and kinase domains which may account for the increased basal activity. Displays altered substrate specificity compared to isoform 1, showing weak affinity for synaptophysin and for peptide substrates containing class I or class II SH3 domain-binding motifs. Plays a role in L1CAM-mediated neurite elongation, possibly by acting downstream of L1CAM to drive cytoskeletal rearrangements involved in neurite outgrowth. This is Proto-oncogene tyrosine-protein kinase Src from Mus musculus (Mouse).